We begin with the raw amino-acid sequence, 918 residues long: Rap guanine nucleotide exchange factor 3 (918 aa).

The residue at position 79 (S79) is a Phosphoserine. Positions 110 to 186 constitute a DEP domain; the sequence is ATYPTLIRDR…RDAQFYRFPG (77 aa). Residues 218-242 form an interaction with PDE3B region; sequence TVALRKPPGQRTDEELDLIFEELLH. 3',5'-cyclic AMP-binding positions include 311–314 and 321–322; these read GQLA and RA. A disordered region spans residues 369 to 388; the sequence is TSQGAGPSRPPTPGRNRYTV. An N-terminal Ras-GEF domain is found at 384–521; that stretch reads NRYTVMSGTP…EQYPERRRHH (138 aa). Residues 398 to 422 form an interaction with PDE3B region; sequence ELLLEAMRPDSSAHDPTETFLSDFL. S531 and S859 each carry phosphoserine. One can recognise a Ras-GEF domain in the interval 665 to 884; that stretch reads SAKDLAGQLT…SRISTCSEQS (220 aa).

As to quaternary structure, interacts with PDE3B and PIK3R6; form a signaling complex that regulates phosphatidylinositol 3-kinase gamma in angiogenesis.

Its subcellular location is the cytoplasm. The protein localises to the membrane. In terms of biological role, guanine nucleotide exchange factor (GEF) for RAP1A and RAP2A small GTPases that is activated by binding cAMP. Through simultaneous binding of PDE3B to RAPGEF3 and PIK3R6 is assembled in a signaling complex in which it activates the PI3K gamma complex and which is involved in angiogenesis. Plays a role in the modulation of the cAMP-induced dynamic control of endothelial barrier function through a pathway that is independent on Rho-mediated signaling. Required for the actin rearrangement at cell-cell junctions, such as stress fibers and junctional actin. This chain is Rap guanine nucleotide exchange factor 3 (Rapgef3), found in Mus musculus (Mouse).